A 235-amino-acid polypeptide reads, in one-letter code: Phosphoribosylaminoimidazole-succinocarboxamide synthase (235 aa).

The protein belongs to the SAICAR synthetase family.

It catalyses the reaction 5-amino-1-(5-phospho-D-ribosyl)imidazole-4-carboxylate + L-aspartate + ATP = (2S)-2-[5-amino-1-(5-phospho-beta-D-ribosyl)imidazole-4-carboxamido]succinate + ADP + phosphate + 2 H(+). The protein operates within purine metabolism; IMP biosynthesis via de novo pathway; 5-amino-1-(5-phospho-D-ribosyl)imidazole-4-carboxamide from 5-amino-1-(5-phospho-D-ribosyl)imidazole-4-carboxylate: step 1/2. This is Phosphoribosylaminoimidazole-succinocarboxamide synthase from Clostridium acetobutylicum (strain ATCC 824 / DSM 792 / JCM 1419 / IAM 19013 / LMG 5710 / NBRC 13948 / NRRL B-527 / VKM B-1787 / 2291 / W).